Consider the following 513-residue polypeptide: Carotenoid isomerooxygenase (513 aa).

His184, His242, His312, and His503 together coordinate Fe cation.

Belongs to the carotenoid oxygenase family. The cofactor is Fe(2+).

It catalyses the reaction all-trans-zeaxanthin + O2 = (3R)-11-cis-3-hydroxyretinal + (3R)-all-trans-3-hydroxyretinal. Its pathway is cofactor metabolism; retinol metabolism. Catalyzes the oxidative cleavage at the 15,15'-double bond of carotenoids and the simultaneous all-trans to 11-cis isomerization of one cleavage product. Carotenoids like 11-cis retinal can promote visual pigment biogenesis in the dark. Essential for the biosynthesis of the 3-hydroxyretinal chromophore of rhodopsin from zeaxanthin and for proper photoreceptor development. The polypeptide is Carotenoid isomerooxygenase (ninaB) (Galleria mellonella (Greater wax moth)).